A 338-amino-acid chain; its full sequence is MTQQITVTEHLLLHQKQIPGATGQFTHLFNELVLSAKIISREVNKAGLVDVLGFTGEVNVQGEEVKKLDEYANRILIHRMARSGVLCAMASEENADIIEIPHGLPQGNYIIIFDPLDGSSNIDVNVNIGTIFSIFRRKSKLGTPVQSTDVLQAGCEQVAAGYILYGSSTMLVFTTGDGVHGFTMDPGVGEFLLSHPNMKIPDTGNIYSVNEGYWPYWSEATKKVVGHFKSRDNIHGKPYSLRYIGSLVADFHRNLIYGGVFMYPADDRDPKKPRGKLRLLCEASPMAMLIEQAGGRATDGTQRILDIIPDDLHQRVPLFIGSRHEVETISNIYKENEG.

Glutamate 92, aspartate 114, leucine 116, and aspartate 117 together coordinate Mg(2+). Substrate-binding positions include 117–120, asparagine 210, tyrosine 243, and lysine 276; that span reads DGSS. Glutamate 282 serves as a coordination point for Mg(2+).

Belongs to the FBPase class 1 family. Homotetramer. Requires Mg(2+) as cofactor.

The protein resides in the cytoplasm. The catalysed reaction is beta-D-fructose 1,6-bisphosphate + H2O = beta-D-fructose 6-phosphate + phosphate. It functions in the pathway carbohydrate biosynthesis; gluconeogenesis. This chain is Fructose-1,6-bisphosphatase class 1, found in Maridesulfovibrio salexigens (strain ATCC 14822 / DSM 2638 / NCIMB 8403 / VKM B-1763) (Desulfovibrio salexigens).